A 377-amino-acid polypeptide reads, in one-letter code: 2-aminoethylphosphonate--pyruvate transaminase (377 aa).

Lysine 194 bears the N6-(pyridoxal phosphate)lysine mark.

Belongs to the class-V pyridoxal-phosphate-dependent aminotransferase family. PhnW subfamily. In terms of assembly, homodimer. The cofactor is pyridoxal 5'-phosphate.

It carries out the reaction (2-aminoethyl)phosphonate + pyruvate = phosphonoacetaldehyde + L-alanine. Functionally, involved in phosphonate degradation. The polypeptide is 2-aminoethylphosphonate--pyruvate transaminase (Cupriavidus taiwanensis (strain DSM 17343 / BCRC 17206 / CCUG 44338 / CIP 107171 / LMG 19424 / R1) (Ralstonia taiwanensis (strain LMG 19424))).